The primary structure comprises 104 residues: Pterin-4-alpha-carbinolamine dehydratase (104 aa).

Alanine 2 is modified (N-acetylalanine). Substrate contacts are provided by residues aspartate 61 to histidine 63 and serine 78 to glutamate 81.

The protein belongs to the pterin-4-alpha-carbinolamine dehydratase family. In terms of assembly, homotetramer and homodimer. Heterotetramer with HNF1A; formed by a dimer of dimers. Interacts with HNF1B (via HNF-p1 domain); the interaction increases HNF1B transactivation activity.

It localises to the cytoplasm. It is found in the nucleus. It catalyses the reaction (4aS,6R)-4a-hydroxy-L-erythro-5,6,7,8-tetrahydrobiopterin = (6R)-L-erythro-6,7-dihydrobiopterin + H2O. Its function is as follows. Involved in tetrahydrobiopterin biosynthesis. Seems to both prevent the formation of 7-pterins and accelerate the formation of quinonoid-BH2. Coactivator for HNF1A-dependent transcription. Regulates the dimerization of homeodomain protein HNF1A and enhances its transcriptional activity. Also acts as a coactivator for HNF1B-dependent transcription. The chain is Pterin-4-alpha-carbinolamine dehydratase (PCBD1) from Bos taurus (Bovine).